A 313-amino-acid chain; its full sequence is Protein FixB (313 aa).

Residue 255–283 participates in FAD binding; it reads LYLAVGISGQIQHMVGANGAQTIFAINKD.

Belongs to the ETF alpha-subunit/FixB family. As to quaternary structure, heterodimer of FixA and FixB.

It participates in amine and polyamine metabolism; carnitine metabolism. Required for anaerobic carnitine reduction. May bring reductant to CaiA. The sequence is that of Protein FixB from Salmonella agona (strain SL483).